A 146-amino-acid polypeptide reads, in one-letter code: Large ribosomal subunit protein uL15 (146 aa).

The disordered stretch occupies residues 1–58; that stretch reads MKLNELSPPKGARTARKRKGRGPGSGLGKTAGKGHKGQKARSGGGVRPGFEGGQMPVH. Gly residues-rich tracts occupy residues 22-31 and 42-52; these read GPGSGLGKTA and SGGGVRPGFEG.

The protein belongs to the universal ribosomal protein uL15 family. As to quaternary structure, part of the 50S ribosomal subunit.

Binds to the 23S rRNA. In Desulfatibacillum aliphaticivorans, this protein is Large ribosomal subunit protein uL15.